The primary structure comprises 153 residues: Large ribosomal subunit protein uL22 (153 aa).

Belongs to the universal ribosomal protein uL22 family. Part of the 50S ribosomal subunit.

Its function is as follows. This protein binds specifically to 23S rRNA. It makes multiple contacts with different domains of the 23S rRNA in the assembled 50S subunit and ribosome. Functionally, the globular domain of the protein is located near the polypeptide exit tunnel on the outside of the subunit, while an extended beta-hairpin is found that lines the wall of the exit tunnel in the center of the 70S ribosome. This chain is Large ribosomal subunit protein uL22, found in Methanococcus maripaludis (strain DSM 14266 / JCM 13030 / NBRC 101832 / S2 / LL).